Consider the following 196-residue polypeptide: Ribosome maturation factor RimP (196 aa).

Residues glycine 163–glutamate 196 are disordered.

Belongs to the RimP family.

Its subcellular location is the cytoplasm. Functionally, required for maturation of 30S ribosomal subunits. The chain is Ribosome maturation factor RimP from Stenotrophomonas maltophilia (strain K279a).